We begin with the raw amino-acid sequence, 92 residues long: Small ribosomal subunit protein uS19 (92 aa).

It belongs to the universal ribosomal protein uS19 family.

Its function is as follows. Protein S19 forms a complex with S13 that binds strongly to the 16S ribosomal RNA. This chain is Small ribosomal subunit protein uS19, found in Acidiphilium cryptum (strain JF-5).